Consider the following 127-residue polypeptide: Modulator protein MzrA (127 aa).

Residues 1–10 (MVISPLALRR) are Cytoplasmic-facing. Residues 11–31 (LSYGLIALVLLSALILVWTAL) traverse the membrane as a helical segment. Over 32–127 (QRQESTLAIR…RLRDTSHRFG (96 aa)) the chain is Periplasmic.

It belongs to the MzrA family. In terms of assembly, interacts with EnvZ.

Its subcellular location is the cell inner membrane. Functionally, modulates the activity of the EnvZ/OmpR two-component regulatory system, probably by directly modulating EnvZ enzymatic activity and increasing stability of phosphorylated OmpR. In Enterobacter sp. (strain 638), this protein is Modulator protein MzrA.